Consider the following 380-residue polypeptide: Lipid-A-disaccharide synthase (380 aa).

It belongs to the LpxB family.

It carries out the reaction a lipid X + a UDP-2-N,3-O-bis[(3R)-3-hydroxyacyl]-alpha-D-glucosamine = a lipid A disaccharide + UDP + H(+). The protein operates within bacterial outer membrane biogenesis; LPS lipid A biosynthesis. Its function is as follows. Condensation of UDP-2,3-diacylglucosamine and 2,3-diacylglucosamine-1-phosphate to form lipid A disaccharide, a precursor of lipid A, a phosphorylated glycolipid that anchors the lipopolysaccharide to the outer membrane of the cell. The protein is Lipid-A-disaccharide synthase of Vibrio vulnificus (strain CMCP6).